The sequence spans 3587 residues: Tyrocidine synthase 2 (3587 aa).

Residues 466 to 1045 (AATMHELFSR…IQALAAYVEG (580 aa)) form a domain 1 (Proline-activating) region. Carrier domains follow at residues 972 to 1047 (APTT…EGGE) and 2007 to 2082 (APAT…EHSE). 2 positions are modified to O-(pantetheine 4'-phosphoryl)serine: serine 1007 and serine 2042. A domain 2 (Phenylalanine-activating) region spans residues 1522 to 2081 (EQTAVVFGDK…RDLARLIEHS (560 aa)). The interval 2540–3122 (YRADQTIQQL…NSRESEQGVV (583 aa)) is domain 3 (D-phenylalanine-activating). The interval 3017 to 3040 (NDKIDRKALPKPNQEENRTEQYAA) is disordered. Positions 3018–3035 (DKIDRKALPKPNQEENRT) are enriched in basic and acidic residues. The 75-residue stretch at 3040–3114 (APQTELEQLL…EAALRVIPNS (75 aa)) folds into the Carrier 3 domain. Serine 3075 carries the post-translational modification O-(pantetheine 4'-phosphoryl)serine.

Belongs to the ATP-dependent AMP-binding enzyme family. As to quaternary structure, large multienzyme complex of TycA, TycB and TycC. Requires pantetheine 4'-phosphate as cofactor.

The catalysed reaction is L-phenylalanine + ATP + H2O = D-phenylalanine + AMP + diphosphate + H(+). It functions in the pathway antibiotic biosynthesis; tyrocidine biosynthesis. Its function is as follows. Activates the second to fourth amino acids in tyrocidine (in tyrocidine A, Pro, Phe, and D-Phe) and epimerizes the last one. The protein is Tyrocidine synthase 2 (tycB) of Brevibacillus parabrevis.